The sequence spans 75 residues: Large ribosomal subunit protein bL31 (75 aa).

The protein belongs to the bacterial ribosomal protein bL31 family. Type A subfamily. In terms of assembly, part of the 50S ribosomal subunit.

Functionally, binds the 23S rRNA. This is Large ribosomal subunit protein bL31 from Chlorobium phaeovibrioides (strain DSM 265 / 1930) (Prosthecochloris vibrioformis (strain DSM 265)).